Here is a 130-residue protein sequence, read N- to C-terminus: Methylglyoxal synthase (130 aa).

The MGS-like domain maps to 1-130 (MSTPRIALIA…DLARRLTANA (130 aa)). Residues His-11, Lys-15, 37–40 (TGTT), and 57–58 (SG) contribute to the substrate site. Asp-63 functions as the Proton donor/acceptor in the catalytic mechanism. His-90 contacts substrate.

Belongs to the methylglyoxal synthase family.

It catalyses the reaction dihydroxyacetone phosphate = methylglyoxal + phosphate. In terms of biological role, catalyzes the formation of methylglyoxal from dihydroxyacetone phosphate. In Burkholderia mallei (strain NCTC 10247), this protein is Methylglyoxal synthase.